We begin with the raw amino-acid sequence, 461 residues long: Elongation factor 1-alpha, oocyte form (461 aa).

G2 is subject to N,N,N-trimethylglycine. The tr-type G domain occupies 5-242 (KIHINIVVIG…DCIIPPQRPT (238 aa)). A G1 region spans residues 14-21 (GHVDSGKS). A GTP-binding site is contributed by 14-21 (GHVDSGKS). The segment at 70 to 74 (GITID) is G2. The segment at 91–94 (DAPG) is G3. Residues 91-95 (DAPGH) and 153-156 (NKMD) contribute to the GTP site. The tract at residues 153-156 (NKMD) is G4. The tract at residues 194–196 (SGW) is G5. 2 positions are modified to 5-glutamyl glycerylphosphorylethanolamine: E301 and E374.

This sequence belongs to the TRAFAC class translation factor GTPase superfamily. Classic translation factor GTPase family. EF-Tu/EF-1A subfamily. As to expression, oocyte.

The protein resides in the cytoplasm. Its function is as follows. This protein promotes the GTP-dependent binding of aminoacyl-tRNA to the A-site of ribosomes during protein biosynthesis. This Xenopus laevis (African clawed frog) protein is Elongation factor 1-alpha, oocyte form.